The following is a 513-amino-acid chain: Maturase K (513 aa).

This sequence belongs to the intron maturase 2 family. MatK subfamily.

The protein resides in the plastid. It localises to the chloroplast. In terms of biological role, usually encoded in the trnK tRNA gene intron. Probably assists in splicing its own and other chloroplast group II introns. The chain is Maturase K from Pinus resinosa (Red pine).